Consider the following 345-residue polypeptide: Putative mediator of RNA polymerase II transcription subunit 7 (345 aa).

Low complexity-rich tracts occupy residues 1–27 and 88–126; these read MNTS…TPQQ and NNNN…NNNN. Disordered stretches follow at residues 1–130 and 292–315; these read MNTS…KATT and TPLP…NNSQ.

It belongs to the Mediator complex subunit 7 family. In terms of assembly, component of the Mediator complex.

Its subcellular location is the nucleus. In terms of biological role, component of the Mediator complex, a coactivator involved in the regulated transcription of nearly all RNA polymerase II-dependent genes. Mediator functions as a bridge to convey information from gene-specific regulatory proteins to the basal RNA polymerase II transcription machinery. Mediator is recruited to promoters by direct interactions with regulatory proteins and serves as a scaffold for the assembly of a functional preinitiation complex with RNA polymerase II and the general transcription factors. The protein is Putative mediator of RNA polymerase II transcription subunit 7 (med7) of Dictyostelium discoideum (Social amoeba).